Consider the following 378-residue polypeptide: Chaperone protein DnaJ (378 aa).

One can recognise a J domain in the interval 5-69; it reads EYYDRLGVSK…QKRAAYDQYG (65 aa). The CR-type zinc-finger motif lies at 134–216; sequence GVEKEVSYNR…CHGTGHEKQA (83 aa). Zn(2+) contacts are provided by cysteine 147, cysteine 150, cysteine 164, cysteine 167, cysteine 190, cysteine 193, cysteine 204, and cysteine 207. 4 CXXCXGXG motif repeats span residues 147–154, 164–171, 190–197, and 204–211; these read CGTCLGSG, CRKCHGSG, CDICHGSG, and CQTCHGTG.

It belongs to the DnaJ family. As to quaternary structure, homodimer. The cofactor is Zn(2+).

The protein resides in the cytoplasm. Its function is as follows. Participates actively in the response to hyperosmotic and heat shock by preventing the aggregation of stress-denatured proteins and by disaggregating proteins, also in an autonomous, DnaK-independent fashion. Unfolded proteins bind initially to DnaJ; upon interaction with the DnaJ-bound protein, DnaK hydrolyzes its bound ATP, resulting in the formation of a stable complex. GrpE releases ADP from DnaK; ATP binding to DnaK triggers the release of the substrate protein, thus completing the reaction cycle. Several rounds of ATP-dependent interactions between DnaJ, DnaK and GrpE are required for fully efficient folding. Also involved, together with DnaK and GrpE, in the DNA replication of plasmids through activation of initiation proteins. This is Chaperone protein DnaJ from Streptococcus pyogenes.